Consider the following 258-residue polypeptide: MSSSRDEFVYMAKLAEQAERYEEMVDFMEKVVTAADGGEELTIEERNLLSVAYKNVIGARRASWRIISSIEQKEESRGNEDHVTSIKTYRSKIESELTSICNGILKLLDSNLIRAASTGDSKVFYLKMKGDYHRYLAEFKTGAERKEAAENTLSSYKSAQDIANAELAPTHPIRLGLALNFSVFYYEILNSPDRACNLAKQAFDEAIAELDTLGEESYKDSTLIMQLLRDNLTLWTSDMQDEGTEEMKEVAKPDNEEH.

This sequence belongs to the 14-3-3 family.

In Nicotiana tabacum (Common tobacco), this protein is 14-3-3-like protein F.